Here is a 124-residue protein sequence, read N- to C-terminus: Small ribosomal subunit protein bS6 (124 aa).

Basic and acidic residues predominate over residues 105 to 115; that stretch reads EVQHEEARKSA. Residues 105–124 are disordered; that stretch reads EVQHEEARKSAQSDAPVAAA.

Belongs to the bacterial ribosomal protein bS6 family.

Binds together with bS18 to 16S ribosomal RNA. The sequence is that of Small ribosomal subunit protein bS6 from Polynucleobacter necessarius subsp. necessarius (strain STIR1).